The following is a 1521-amino-acid chain: uncharacterized protein (1521 aa).

5 disordered regions span residues 1–20, 85–124, 218–254, 431–482, and 735–797; these read MENNNGNSVINKSNDKNSNN, TFQSPPQPINTSSTQTNYNNQNNPNPNPNPSPNPNSNNNN, ASSPSTPSTPSSSSRSQQQQQQQQQQSSSSSLSSSSS, VLNS…TGIT, and NNNN…HQQQ. 3 stretches are compositionally biased toward low complexity: residues 94–108, 219–254, and 431–454; these read NTSSTQTNYNNQNNP, SSPSTPSTPSSSSRSQQQQQQQQQQSSSSSLSSSSS, and VLNSNSNSSSGGASSSSGGSNNTS. Polar residues predominate over residues 455-464; the sequence is PAIVTSASIH. Low complexity-rich tracts occupy residues 465-482 and 735-762; these read NSNGNSNENEIEKSTGIT and NNNNNNNNNNNNNNNNNNNNNNNNNNIL. The segment covering 763 to 774 has biased composition (polar residues); sequence SNTLTSSLINEP. Residues 775–788 are compositionally biased toward low complexity; sequence NQQHQHQQHQQQNQ. Positions 853–903 form a coiled coil; sequence IVNSQQQQQQQQQQQQQQQQQQQQQQQQQQQQQQQQQQQQQQHNNTQNINN. Low complexity predominate over residues 1398 to 1453; sequence QQPLPTSKTSSSSSSTSSEATPYLSSSVPPSIVTSTPSTTPMISSSNPNTSSLPTS. The tract at residues 1398 to 1455 is disordered; it reads QQPLPTSKTSSSSSSTSSEATPYLSSSVPPSIVTSTPSTTPMISSSNPNTSSLPTSER.

This is an uncharacterized protein from Dictyostelium discoideum (Social amoeba).